Here is a 245-residue protein sequence, read N- to C-terminus: 2,3-bisphosphoglycerate-dependent phosphoglycerate mutase (245 aa).

Substrate-binding positions include 8 to 15, 21 to 22, Arg60, 87 to 90, Lys98, 114 to 115, and 183 to 184; these read RHGQSLWN, TG, ERHY, RR, and GN. The active-site Tele-phosphohistidine intermediate is His9. Glu87 functions as the Proton donor/acceptor in the catalytic mechanism.

The protein belongs to the phosphoglycerate mutase family. BPG-dependent PGAM subfamily.

The catalysed reaction is (2R)-2-phosphoglycerate = (2R)-3-phosphoglycerate. It functions in the pathway carbohydrate degradation; glycolysis; pyruvate from D-glyceraldehyde 3-phosphate: step 3/5. Functionally, catalyzes the interconversion of 2-phosphoglycerate and 3-phosphoglycerate. The chain is 2,3-bisphosphoglycerate-dependent phosphoglycerate mutase from Bacillus cereus (strain ATCC 14579 / DSM 31 / CCUG 7414 / JCM 2152 / NBRC 15305 / NCIMB 9373 / NCTC 2599 / NRRL B-3711).